A 20-amino-acid polypeptide reads, in one-letter code: Thrombin-like enzyme Cdc SII (20 aa).

This sequence belongs to the peptidase S1 family. Snake venom subfamily. In terms of assembly, monomer. Expressed by the venom gland.

It is found in the secreted. With respect to regulation, strongly inhibited by PMSF and moderately inhibited by leupeptin. Not inhibited by EDTA, aprotinin, pepstatin, and bestatin. In terms of biological role, thrombin-like snake venom serine protease that coagulates human plasma and bovine fibrinogen by hydrolysis of the alpha chains (FGA) (minimum coagulation dose is 60 ug on fibrinogen). Has fibrinogenolytic activities, and degrades preferentially the Aalpha chain (FGA). Shows amidolytic activity toward N-benzoyl-L-Arg-p-nitroanilide, has a higher activity than Cdc SI. In vivo, intravenous injection induces defibrin(ogen)ation and a loss of the righting reflex and opisthotoxins, together with a typical gyroxin-like effect (18-20 minutes). Subcutaneous injection into the footpads induces moderate edema. Potentiates local hemorrhagic activity induced by metalloproteinases (BaP1). The chain is Thrombin-like enzyme Cdc SII from Crotalus durissus cumanensis (South American rattlesnake).